A 514-amino-acid chain; its full sequence is Maturase K (514 aa).

Belongs to the intron maturase 2 family. MatK subfamily.

The protein resides in the plastid. It localises to the chloroplast. In terms of biological role, usually encoded in the trnK tRNA gene intron. Probably assists in splicing its own and other chloroplast group II introns. The sequence is that of Maturase K from Acer palmatum (Japanese maple).